The chain runs to 458 residues: DNA repair protein RadA (458 aa).

The C4-type zinc finger occupies 11 to 28; sequence CNDCGAEFSRWQGQCSAC. ATP is bound at residue 100-107; that stretch reads GHPGAGKS. A RadA KNRFG motif motif is present at residues 256-260; sequence KNRFG. The segment at 355 to 458 is lon-protease-like; it reads DVFVNVVGGV…TDALAVLDNL (104 aa).

This sequence belongs to the RecA family. RadA subfamily.

Functionally, DNA-dependent ATPase involved in processing of recombination intermediates, plays a role in repairing DNA breaks. Stimulates the branch migration of RecA-mediated strand transfer reactions, allowing the 3' invading strand to extend heteroduplex DNA faster. Binds ssDNA in the presence of ADP but not other nucleotides, has ATPase activity that is stimulated by ssDNA and various branched DNA structures, but inhibited by SSB. Does not have RecA's homology-searching function. This is DNA repair protein RadA from Haemophilus influenzae (strain ATCC 51907 / DSM 11121 / KW20 / Rd).